Reading from the N-terminus, the 82-residue chain is Putative antimicrobial peptide 7848 (82 aa).

Residues 1–17 (MNENLWAAPAPKKLSKH) form the signal peptide. The segment at 16–60 (KHFFGRGGPLGKETGPNLFPKKPGAGKGLGFPPTKKPRGQPRVLK) is disordered. Positions 38–82 (PGAGKGLGFPPTKKPRGQPRVLKKPKWNSEGLIGILHRGSDGVQF) are excised as a propeptide. The span at 50–60 (KKPRGQPRVLK) shows a compositional bias: basic residues.

Belongs to the non-disulfide-bridged peptide (NDBP) superfamily. Short antimicrobial peptide (group 4) family. Expressed by the venom gland.

The protein localises to the secreted. In Urodacus yaschenkoi (Inland robust scorpion), this protein is Putative antimicrobial peptide 7848.